Consider the following 118-residue polypeptide: MARVKRGVVARARHKKILKQAKGYYGARSRVYRVAFQAVIKAGQYAYRDRRQRKRQFRQLWIARINAAARQNGLSYSKFINGLKKASVEIDRKILADIAVFDKLAFSALVEKAKAALA.

It belongs to the bacterial ribosomal protein bL20 family.

Functionally, binds directly to 23S ribosomal RNA and is necessary for the in vitro assembly process of the 50S ribosomal subunit. It is not involved in the protein synthesizing functions of that subunit. This Pectobacterium atrosepticum (strain SCRI 1043 / ATCC BAA-672) (Erwinia carotovora subsp. atroseptica) protein is Large ribosomal subunit protein bL20.